Consider the following 40-residue polypeptide: Acyl-CoA-binding protein 2 (40 aa).

Basic and acidic residues predominate over residues 1–15 (ALKEEFEEHAEKAKT). Residues 1–25 (ALKEEFEEHAEKAKTLPENTSSENK) form a disordered region. The ACB domain maps to 2 to 40 (LKEEFEEHAEKAKTLPENTSSENKLTLYGLYKQATVGNV).

The protein belongs to the ACBP family.

The protein resides in the cytoplasm. Functionally, binds medium- and long-chain acyl-CoA esters with very high affinity and may function as an intracellular carrier of acyl-CoA esters. The protein is Acyl-CoA-binding protein 2 of Digitalis lanata (Grecian foxglove).